A 501-amino-acid polypeptide reads, in one-letter code: MAINAQEISALIKKQIENFQPNFDVTETGVVTYIGDGIARARGLDNAMSGELLEFSNGAFGMAQNLESNDVGIIILGEFSTIREGDVVKRTGKIMEVPVGEALIGRVVNPLGQPVDGLGDIATTGFRPVEAVAPGVMQRKSVSEPLQTGLKAIDALVPIGRGQRELIIGDRQTGKTSVAIDAILNQKGQDMICIYVAIGQKESTVRTQVETLRRYGALDYTIVVTASASQPSPLLFIAPYAGVAMAEEFMYQGKHVLIVYDDLSKQAVAYRELSLLLRRPPGREAYPGDVFYLHSRLLERSAKVSDDLGGGSITALPFIETQAGDISAYIATNVISITDGQIFLQESLFNSGIRPAIDAGSSVSRVGGSAQIKAMKKVAGTLRLDLASYRELEAFTQFGSDLDAATQAKLNRGRRTVEILKQPLHKPLPVEKQVVILYALTHGFLDDVPVNDILAFEEALYDYFDMHYSHLFETIRTTKDLPEEKDLDDAIKAFKDQANFN.

169–176 (GDRQTGKT) lines the ATP pocket.

The protein belongs to the ATPase alpha/beta chains family. F-type ATPases have 2 components, CF(1) - the catalytic core - and CF(0) - the membrane proton channel. CF(1) has five subunits: alpha(3), beta(3), gamma(1), delta(1), epsilon(1). CF(0) has three main subunits: a(1), b(2) and c(9-12). The alpha and beta chains form an alternating ring which encloses part of the gamma chain. CF(1) is attached to CF(0) by a central stalk formed by the gamma and epsilon chains, while a peripheral stalk is formed by the delta and b chains.

It localises to the cell membrane. The enzyme catalyses ATP + H2O + 4 H(+)(in) = ADP + phosphate + 5 H(+)(out). Produces ATP from ADP in the presence of a proton gradient across the membrane. The alpha chain is a regulatory subunit. This is ATP synthase subunit alpha from Streptococcus uberis (strain ATCC BAA-854 / 0140J).